We begin with the raw amino-acid sequence, 471 residues long: Putative multidrug resistance protein MdtD (471 aa).

Over 1–11 (MTDLPDSTRWQ) the chain is Periplasmic. The helical transmembrane segment at 12-32 (LWIVAFGFFMQSLDTTIVNTA) threads the bilayer. The Cytoplasmic segment spans residues 33-48 (LPSMAQSLGESPLHMH). Residues 49 to 69 (MVIVSYVLTVAVMLPASGWLA) traverse the membrane as a helical segment. The Periplasmic segment spans residues 70–76 (DKVGVRN). The helical transmembrane segment at 77–97 (IFFTAIVLFTLGSLFCALSGT) threads the bilayer. The Cytoplasmic segment spans residues 98-101 (LNEL). Residues 102–124 (LLARALQGVGGAMMVPVGRLTVM) form a helical membrane-spanning segment. Over 125-137 (KIVPREQYMAAMT) the chain is Periplasmic. The chain crosses the membrane as a helical span at residues 138-158 (FVTLPGQVGPLLGPALGGLLV). Residues 159–164 (EYASWH) lie on the Cytoplasmic side of the membrane. The helical transmembrane segment at 165 to 185 (WIFLINIPVGIIGAIATLMLM) threads the bilayer. At 186–196 (PNYTMQTRRFD) the chain is on the periplasmic side. A helical transmembrane segment spans residues 197–217 (LSGFLLLAVGMAVLTLALDGS). At 218–224 (KGTGLSP) the chain is on the cytoplasmic side. Residues 225–245 (LTIDGLVAVGVVALVLYLLHA) form a helical membrane-spanning segment. Residues 246 to 262 (RNNNRALFSLKLFRTRT) are Periplasmic-facing. The chain crosses the membrane as a helical span at residues 263–283 (FSLGLAGSFAGRIGSGMLPFM). Topologically, residues 284–285 (TP) are cytoplasmic. The helical transmembrane segment at 286 to 306 (VFLQIGLGFSPFHAGLMMIPM) threads the bilayer. Residues 307 to 341 (VLGSMGMKRIVVQVVNRFGYRRVLVATTLGLSLVT) are Periplasmic-facing. A helical membrane pass occupies residues 342 to 362 (LLFMTTALLGWYYVLPFVLFL). Topologically, residues 363 to 395 (QGMVNSTRFSSMNTLTLKDLPDNLASSGNSLLS) are cytoplasmic. A helical transmembrane segment spans residues 396-416 (MIMQLSMSIGVTIAGLLLGLF). Residues 417 to 430 (GSQHVSIDSGTTQT) are Periplasmic-facing. The chain crosses the membrane as a helical span at residues 431–451 (VFMYTWLSMALIIALPAFIFA). Topologically, residues 452–471 (RVPNDTHQNVAISRRKRSAQ) are cytoplasmic.

This sequence belongs to the major facilitator superfamily. TCR/Tet family.

Its subcellular location is the cell inner membrane. The chain is Putative multidrug resistance protein MdtD from Escherichia coli (strain SE11).